Reading from the N-terminus, the 353-residue chain is Photosystem II D2 protein (353 aa).

Position 2 is an N-acetylthreonine (Thr2). The residue at position 2 (Thr2) is a Phosphothreonine. A helical membrane pass occupies residues 41-61; it reads CAYFAVGGWFTGTTFVTSWYT. Residue His118 coordinates chlorophyll a. The helical transmembrane segment at 125 to 141 threads the bilayer; that stretch reads GFMLRQFELARSVQLRP. The pheophytin a site is built by Gln130 and Asn143. The chain crosses the membrane as a helical span at residues 153–166; sequence VFVSVFLIYPLGQS. His198 is a binding site for chlorophyll a. The helical transmembrane segment at 208-228 threads the bilayer; that stretch reads AALLCAIHGATVENTLFEDGD. A plastoquinone is bound by residues His215 and Phe262. His215 contributes to the Fe cation binding site. His269 lines the Fe cation pocket. Residues 279–295 form a helical membrane-spanning segment; that stretch reads GLWMSALGVVGLALNLR.

This sequence belongs to the reaction center PufL/M/PsbA/D family. In terms of assembly, PSII is composed of 1 copy each of membrane proteins PsbA, PsbB, PsbC, PsbD, PsbE, PsbF, PsbH, PsbI, PsbJ, PsbK, PsbL, PsbM, PsbT, PsbX, PsbY, PsbZ, Psb30/Ycf12, at least 3 peripheral proteins of the oxygen-evolving complex and a large number of cofactors. It forms dimeric complexes. The D1/D2 heterodimer binds P680, chlorophylls that are the primary electron donor of PSII, and subsequent electron acceptors. It shares a non-heme iron and each subunit binds pheophytin, quinone, additional chlorophylls, carotenoids and lipids. There is also a Cl(-1) ion associated with D1 and D2, which is required for oxygen evolution. The PSII complex binds additional chlorophylls, carotenoids and specific lipids. is required as a cofactor.

Its subcellular location is the plastid. The protein localises to the chloroplast thylakoid membrane. The catalysed reaction is 2 a plastoquinone + 4 hnu + 2 H2O = 2 a plastoquinol + O2. Its function is as follows. Photosystem II (PSII) is a light-driven water:plastoquinone oxidoreductase that uses light energy to abstract electrons from H(2)O, generating O(2) and a proton gradient subsequently used for ATP formation. It consists of a core antenna complex that captures photons, and an electron transfer chain that converts photonic excitation into a charge separation. The D1/D2 (PsbA/PsbD) reaction center heterodimer binds P680, the primary electron donor of PSII as well as several subsequent electron acceptors. D2 is needed for assembly of a stable PSII complex. The protein is Photosystem II D2 protein of Atropa belladonna (Belladonna).